The chain runs to 467 residues: Zinc finger and BTB domain-containing protein 43 (467 aa).

Met-1 carries the N-acetylmethionine modification. A BTB domain is found at 33–97 (CDVSIVVQGH…SYTGRLVMPA (65 aa)). Disordered stretches follow at residues 134 to 153 (LNHG…GLVE) and 162 to 227 (HTDF…EFHY). Over residues 140–149 (HQSPSSSNYN) the composition is skewed to polar residues. Basic and acidic residues-rich tracts occupy residues 164-174 (DFPKAQELRDG) and 182-194 (KDEL…EHEY). Residues Lys-182, Lys-247, Lys-297, and Lys-358 each participate in a glycyl lysine isopeptide (Lys-Gly) (interchain with G-Cter in SUMO2) cross-link. The C2H2-type 1; atypical zinc-finger motif lies at 373 to 394 (YPCQCGKSFTHKSQRDRHMSMH). The C2H2-type 2 zinc finger occupies 400 to 422 (YGCSVCGKKFKMKHHLVGHMKIH). Phosphothreonine is present on Thr-423. The segment at 428 to 450 (YECNICAKRFMWRDSFHRHVTSC) adopts a C2H2-type 3; atypical zinc-finger fold. Lys-458 participates in a covalent cross-link: Glycyl lysine isopeptide (Lys-Gly) (interchain with G-Cter in SUMO2).

Belongs to the krueppel C2H2-type zinc-finger protein family. In terms of assembly, interacts with BDP1.

The protein localises to the nucleus. May be involved in transcriptional regulation. In Mus musculus (Mouse), this protein is Zinc finger and BTB domain-containing protein 43 (Zbtb43).